The primary structure comprises 1004 residues: Glutamate [NMDA] receptor subunit 1 (1004 aa).

A signal peptide spans 1–39 (MAGTDSPAAARFVYRCLLFAPAIVVGLLLPLTLPPIAAA). The Extracellular portion of the chain corresponds to 40–585 (QRHTASDNPS…TLVSFLQPFS (546 aa)). 7 N-linked (GlcNAc...) asparagine glycosylation sites follow: Asn-270, Asn-326, Asn-357, Asn-409, Asn-466, Asn-493, and Asn-513. Residues 542 to 544 (PLT) and Arg-549 contribute to the glycine site. Residues 586–606 (NTLWILVMVSVHVVALVLYLL) form a helical membrane-spanning segment. At 607 to 663 (DRFSPFGRFKLSHSDSNEEKALNLSSAVWFAWGVLLNSGIGEGTPRSFSARVLGMVW) the chain is on the cytoplasmic side. The helical transmembrane segment at 664 to 684 (AGFAMIIVASYTANLAAFLVL) threads the bilayer. Over 685 to 843 (ERPKTKLSGI…KTPNTLGLKN (159 aa)) the chain is Extracellular. An N-linked (GlcNAc...) asparagine glycan is attached at Asn-705. Positions 715 and 759 each coordinate glycine. Residues 844-864 (MAGVFILVGVGIAGGVGLIII) form a helical membrane-spanning segment. Over 865-1004 (EVIYKKHQVK…YTSDVSHLVV (140 aa)) the chain is Cytoplasmic. Positions 980–1004 (TRPQQNILPPRYSPGYTSDVSHLVV) are disordered. Positions 994–1004 (GYTSDVSHLVV) are enriched in polar residues.

The protein belongs to the glutamate-gated ion channel (TC 1.A.10.1) family. In terms of assembly, forms a heteromeric NMDA channel with Nmdar2.

The protein resides in the cell membrane. Its subcellular location is the postsynaptic cell membrane. It is found in the postsynaptic density. Functionally, NMDA receptor subtype of glutamate-gated ion channels with high calcium permeability and voltage-dependent sensitivity to magnesium. Mediated by glycine. This protein plays a key role in synaptic plasticity, synaptogenesis, excitotoxicity, memory acquisition and learning. It mediates neuronal functions in glutamate neurotransmission. Is involved in the cell surface targeting of NMDA receptors. Plays a role in associative learning and in long-term memory consolidation. This chain is Glutamate [NMDA] receptor subunit 1, found in Drosophila pseudoobscura pseudoobscura (Fruit fly).